The sequence spans 270 residues: NADPH-dependent 7-cyano-7-deazaguanine reductase (270 aa).

79-81 (IES) contacts substrate. Residue 81 to 82 (SK) participates in NADPH binding. The active-site Thioimide intermediate is the C177. The active-site Proton donor is the D184. 216–217 (HE) contacts substrate. 245-246 (RG) is an NADPH binding site.

Belongs to the GTP cyclohydrolase I family. QueF type 2 subfamily. As to quaternary structure, homodimer.

The protein localises to the cytoplasm. The enzyme catalyses 7-aminomethyl-7-carbaguanine + 2 NADP(+) = 7-cyano-7-deazaguanine + 2 NADPH + 3 H(+). Its pathway is tRNA modification; tRNA-queuosine biosynthesis. Catalyzes the NADPH-dependent reduction of 7-cyano-7-deazaguanine (preQ0) to 7-aminomethyl-7-deazaguanine (preQ1). The polypeptide is NADPH-dependent 7-cyano-7-deazaguanine reductase (Acinetobacter baumannii (strain AB307-0294)).